The following is a 302-amino-acid chain: B3 domain-containing protein At3g17010 (302 aa).

Positions 21–116 form a DNA-binding region, TF-B3 1; that stretch reads FFKIFQRADL…VFHVNIYEQN (96 aa). The tract at residues 123–192 is disordered; sequence PRKFQTMGPS…KVKKKSKSKS (70 aa). The segment covering 135–174 has biased composition (basic and acidic residues); the sequence is IKKEEGENSLIDVKKEEESDESPGRAEFLVRKKKTEDSKS. Positions 175-192 are enriched in basic residues; the sequence is SKKKMTRNKVKKKSKSKS. A DNA-binding region (TF-B3 2) is located at residues 199-292; that stretch reads VPEFKITIRK…EFVLLTSKKN (94 aa).

The protein localises to the nucleus. In Arabidopsis thaliana (Mouse-ear cress), this protein is B3 domain-containing protein At3g17010.